A 499-amino-acid chain; its full sequence is MRSSLAPAIRLMQSVSRDSCYRGFIIVMTFLFYTCYHMSRKPISIVKGQLHRNCSALPSPPNISANDTTWCSWAPFENSNYKELLGSLDTAFLVSYAIGMFFSGIFGERLPLRYYLSGGMIICGIFTSFMGLGYYWNIHALWYYILFQILNGLAQTTGWPSVVTCMGNWFGKGKRGFIMGIWNSHTAVGNILGSLIAGAFVSTAWGLSFIVPGIIIAAFGIFCFFFLVEYPEDVGCTPPQQPEDTKENLEDMPVSYNSTDTICKSTESNEDDSGNAHTETEHPQAISFFGALRIPGVVEFSLCLLFAKLVSYTFLYWLPLYIANDAQFDPKAAGDLSTLFDVGGIIGGILAGGISDYTGKSAITCTIMLILTAPMLFIYNYLGQTGVSTTVAMLIVCGILVNGPYSLITTAVSADLGTHESLQGNAKALSTVTAIIDGSGSIGAALGPSLAGVLSSRGWNYVFYMLIAADICACLLLVRLVYKEIRTLCGGMRKSYTEM.

The chain crosses the membrane as a helical span at residues 21-40; the sequence is YRGFIIVMTFLFYTCYHMSR. N-linked (GlcNAc...) asparagine glycans are attached at residues N53, N62, and N66. The next 11 helical transmembrane spans lie at 86–106, 116–136, 138–158, 187–207, 208–228, 302–322, 334–354, 362–382, 391–411, 434–454, and 458–478; these read GSLDTAFLVSYAIGMFFSGIF, LSGGMIICGIFTSFMGLGYYW, IHALWYYILFQILNGLAQTTG, AVGNILGSLIAGAFVSTAWGL, SFIVPGIIIAAFGIFCFFFLV, LCLLFAKLVSYTFLYWLPLYI, GDLSTLFDVGGIIGGILAGGI, AITCTIMLILTAPMLFIYNYL, VAMLIVCGILVNGPYSLITTA, AIIDGSGSIGAALGPSLAGVL, and GWNYVFYMLIAADICACLLLV.

The protein belongs to the major facilitator superfamily. Organophosphate:Pi antiporter (OPA) (TC 2.A.1.4) family.

The protein localises to the endoplasmic reticulum membrane. The enzyme catalyses D-glucose 6-phosphate(in) + phosphate(out) = D-glucose 6-phosphate(out) + phosphate(in). Inorganic phosphate and glucose-6-phosphate antiporter. May transport cytoplasmic glucose-6-phosphate into the lumen of the endoplasmic reticulum and translocate inorganic phosphate into the opposite direction. The protein is Glucose-6-phosphate exchanger SLC37A2 of Xenopus tropicalis (Western clawed frog).